Here is a 264-residue protein sequence, read N- to C-terminus: Methionine aminopeptidase (264 aa).

His79 is a binding site for substrate. Residues Asp97, Asp108, and His171 each coordinate a divalent metal cation. Position 178 (His178) interacts with substrate. Glu204 and Glu235 together coordinate a divalent metal cation.

This sequence belongs to the peptidase M24A family. Methionine aminopeptidase type 1 subfamily. As to quaternary structure, monomer. The cofactor is Co(2+). Zn(2+) is required as a cofactor. Mn(2+) serves as cofactor. It depends on Fe(2+) as a cofactor.

It catalyses the reaction Release of N-terminal amino acids, preferentially methionine, from peptides and arylamides.. Removes the N-terminal methionine from nascent proteins. The N-terminal methionine is often cleaved when the second residue in the primary sequence is small and uncharged (Met-Ala-, Cys, Gly, Pro, Ser, Thr, or Val). Requires deformylation of the N(alpha)-formylated initiator methionine before it can be hydrolyzed. The sequence is that of Methionine aminopeptidase from Salmonella typhi.